Consider the following 609-residue polypeptide: ATP-dependent lipid A-core flippase (609 aa).

A run of 6 helical transmembrane segments spans residues leucine 47–isoleucine 67, isoleucine 88–phenylalanine 108, alanine 167–valine 187, tryptophan 190–isoleucine 210, valine 279–glycine 299, and glycine 305–leucine 325. An ABC transmembrane type-1 domain is found at leucine 47–lysine 340. The ABC transporter domain maps to valine 372–serine 606. Position 404 to 411 (glycine 404 to threonine 411) interacts with ATP.

The protein belongs to the ABC transporter superfamily. Lipid exporter (TC 3.A.1.106) family. As to quaternary structure, homodimer.

It localises to the cell inner membrane. The enzyme catalyses ATP + H2O + lipid A-core oligosaccharideSide 1 = ADP + phosphate + lipid A-core oligosaccharideSide 2.. Its function is as follows. Involved in lipopolysaccharide (LPS) biosynthesis. Translocates lipid A-core from the inner to the outer leaflet of the inner membrane. Transmembrane domains (TMD) form a pore in the inner membrane and the ATP-binding domain (NBD) is responsible for energy generation. The sequence is that of ATP-dependent lipid A-core flippase from Francisella tularensis subsp. tularensis (strain FSC 198).